The primary structure comprises 120 residues: UPF0102 protein PST_1070 (120 aa).

It belongs to the UPF0102 family.

The sequence is that of UPF0102 protein PST_1070 from Stutzerimonas stutzeri (strain A1501) (Pseudomonas stutzeri).